Here is a 446-residue protein sequence, read N- to C-terminus: Zinc finger protein BALDIBIS (446 aa).

The disordered stretch occupies residues 20 to 53; that stretch reads EHIAPNPNPNPNPTSSNSAKRKRNLPGNPDPDAE. Residue serine 58 is modified to Phosphoserine. 2 C2H2-type zinc fingers span residues 68 to 90 and 110 to 140; these read FICE…RRGH and YICP…SRKH. Positions 132-139 match the Nuclear localization signal motif; it reads IKKHFSRK. The C2H2-type 2; degenerate zinc-finger motif lies at 145-168; it reads WKCDKCSKKYAVMSDWKAHSKICG. Zn(2+)-binding residues include cysteine 147, cysteine 150, histidine 163, cysteine 167, cysteine 174, cysteine 176, histidine 189, and cysteine 193. The segment at 172-195 adopts a CCHC-type 2; atypical zinc-finger fold; the sequence is YRCDCGTLFSRKDSFITHRAFCDA. An SHR-binding region spans residues 182 to 194; it reads RKDSFITHRAFCD. A disordered region spans residues 425-446; it reads HNLPDSSPPASTDGTPTADMNQ. Residues 427–446 are compositionally biased toward polar residues; the sequence is LPDSSPPASTDGTPTADMNQ.

As to quaternary structure, binds to RGA and SCL3 competitively in the nucleus. Expressed in roots, especially in vascular initials, cortex, endodermis, and quiescent center (QC).

The protein localises to the nucleus. Its function is as follows. Transcription factor that, together with JKD, regulates tissue boundaries and asymmetric cell division in roots by a rapid up-regulation of 'SCARECROW' (SCR), thus controlling the nuclear localization of 'SHORT-ROOT' (SHR) and restricting its action. Confines CYCD6 expression to the cortex-endodermis initial/daughter (CEI/CEID) tissues. Binds DNA via its zinc fingers. Recognizes and binds to SCL3 promoter sequence 5'-AGACAA-3' to promote its expression when in complex with RGA. The polypeptide is Zinc finger protein BALDIBIS (Arabidopsis thaliana (Mouse-ear cress)).